Reading from the N-terminus, the 79-residue chain is uncharacterized protein (79 aa).

The first 33 residues, methionine 1 to alanine 33, serve as a signal peptide directing secretion.

This is an uncharacterized protein from Salmonella paratyphi A (strain ATCC 9150 / SARB42).